Consider the following 431-residue polypeptide: Venom metalloproteinase 1 (431 aa).

The signal sequence occupies residues 1–22 (MDLFILTRFILFLSFFMKSIHC). N-linked (GlcNAc...) asparagine glycans are attached at residues asparagine 64, asparagine 113, asparagine 148, and asparagine 187. Residues 228–428 (DLLMKTSRRL…TSAACLKDTY (201 aa)) form the Peptidase M12B domain. 2 disulfide bridges follow: cysteine 340/cysteine 423 and cysteine 379/cysteine 407. Histidine 363 contacts Zn(2+). Glutamate 364 is a catalytic residue. Residues histidine 367 and histidine 373 each coordinate Zn(2+). Asparagine 414 carries an N-linked (GlcNAc...) asparagine glycan.

In the C-terminal section; belongs to the venom metalloproteinase (M12B) family. In terms of assembly, monomer. Zn(2+) is required as a cofactor. As to expression, expressed by the venom gland.

It localises to the secreted. Its activity is regulated as follows. The gelatinase activity is inhibited by EDTA. Functionally, the recombinant protein has gelatinase activity. In vivo, injection of this recombinant into fifth instar L.oleracea (host) larvae results in partial insect mortality associated with the molt to sixth instar, with surviving insects showing retarded development and growth. This is Venom metalloproteinase 1 from Eulophus pennicornis (Parasitoid wasp).